The sequence spans 173 residues: Shikimate kinase 1 (173 aa).

14-19 (GAGKST) provides a ligand contact to ATP. S18 provides a ligand contact to Mg(2+). Positions 36, 60, and 82 each coordinate substrate. R120 contributes to the ATP binding site. Position 140 (R140) interacts with substrate. Q157 is a binding site for ATP.

It belongs to the shikimate kinase family. In terms of assembly, monomer. Mg(2+) serves as cofactor.

It is found in the cytoplasm. It catalyses the reaction shikimate + ATP = 3-phosphoshikimate + ADP + H(+). It functions in the pathway metabolic intermediate biosynthesis; chorismate biosynthesis; chorismate from D-erythrose 4-phosphate and phosphoenolpyruvate: step 5/7. Functionally, catalyzes the specific phosphorylation of the 3-hydroxyl group of shikimic acid using ATP as a cosubstrate. This Sodalis glossinidius (strain morsitans) protein is Shikimate kinase 1.